The chain runs to 667 residues: Threonine--tRNA ligase (667 aa).

The region spanning 3-64 (DMIRVTLPDG…EEDTNLALVT (62 aa)) is the TGS domain. The interval 252–561 (DHRRLGQEMD…LIEHFVGRFP (310 aa)) is catalytic. Zn(2+) contacts are provided by C357, H408, and H538.

The protein belongs to the class-II aminoacyl-tRNA synthetase family. Homodimer. It depends on Zn(2+) as a cofactor.

It localises to the cytoplasm. It catalyses the reaction tRNA(Thr) + L-threonine + ATP = L-threonyl-tRNA(Thr) + AMP + diphosphate + H(+). Catalyzes the attachment of threonine to tRNA(Thr) in a two-step reaction: L-threonine is first activated by ATP to form Thr-AMP and then transferred to the acceptor end of tRNA(Thr). Also edits incorrectly charged L-seryl-tRNA(Thr). This Sphingopyxis alaskensis (strain DSM 13593 / LMG 18877 / RB2256) (Sphingomonas alaskensis) protein is Threonine--tRNA ligase.